We begin with the raw amino-acid sequence, 259 residues long: MADSREENVYMAKLAEQAERYEEMVEFMEKVAKVDVEELTVEERNLLSVAYKNVIGARRASWRIISSIEQKEESRGNEDHVSSIKEYRVKIEAELSKICDGILSLLESHLVPSASTAESKVFYLKMKGDYHRYLAEFKTGARERKEAAENTLLAYKSAQDIALAELTPTHPIRLGLALNFSVFYYEILNSPDRACNLAKQAFDDAIAELDTLGEESYKDSTLIMQLLRDNLTLWTSDTTDDAEDEIREGSKQESGDGQQ.

Positions 237–259 are disordered; the sequence is DTTDDAEDEIREGSKQESGDGQQ. The segment covering 247-259 has biased composition (basic and acidic residues); it reads REGSKQESGDGQQ.

Belongs to the 14-3-3 family. As to expression, leaves specific.

The polypeptide is 14-3-3-like protein (Solanum tuberosum (Potato)).